An 800-amino-acid chain; its full sequence is Metabotropic glutamate receptor-like protein C (800 aa).

Residues 1-21 (MKMKIIFLILILIFSINIIKC) form the signal peptide. At 22-392 (DKEFKMLTLL…EVEFSQSLQY (371 aa)) the chain is on the extracellular side. Asn-69, Asn-107, Asn-166, Asn-258, Asn-276, Asn-302, and Asn-345 each carry an N-linked (GlcNAc...) asparagine glycan. The chain crosses the membrane as a helical span at residues 393–413 (GFSITTGVLIAITIIMMLGIV). Residues 414-426 (RYKSTPSIRSASP) lie on the Cytoplasmic side of the membrane. Residues 427–447 (IFLNFILAGGIIVYIGIIVWV) form a helical membrane-spanning segment. Residues 448–463 (GPANDHQCNARLWLVT) lie on the Extracellular side of the membrane. A helical transmembrane segment spans residues 464–484 (LGFSTLIGSLVVKNFRIWLIF). Over 485 to 499 (DNPELKSISITNYQL) the chain is Cytoplasmic. Residues 500-520 (FPWVGACLVINIILMSILTSV) traverse the membrane as a helical segment. Residues 521–551 (GDLREIDAQGIDSLGKYEFMKVCKMNSSGAS) lie on the Extracellular side of the membrane. N-linked (GlcNAc...) asparagine glycosylation occurs at Asn-546. A helical membrane pass occupies residues 552 to 572 (TLYTILAYFAALLLVGVFVSW). Topologically, residues 573 to 586 (KIRIVDIQEFNESK) are cytoplasmic. The chain crosses the membrane as a helical span at residues 587–607 (AIANTLYAISFCLFVIVPLMI). At 608–616 (SPQDKQSET) the chain is on the extracellular side. Residues 617-637 (IVLCTAGLFITTAALLIIFTP) traverse the membrane as a helical segment. Topologically, residues 638–800 (KFWRVFTLGD…NDTEEEDKNQ (163 aa)) are cytoplasmic. Disordered regions lie at residues 658–694 (QSNVATARAESSKSSSGPKLNRRGNLVSDDFTDTETS) and 718–800 (EFDD…DKNQ). Over residues 718–732 (EFDDNNIEQDNDNDN) the composition is skewed to acidic residues. Residues 733 to 774 (DNNNNNNNNNNNNNNNNNNNNNNNNNNNNNNNNNNNNNNNNN) are compositionally biased toward low complexity. Residues 781 to 791 (NDEKVEEKQQN) show a composition bias toward basic and acidic residues.

The protein in the N-terminal section; belongs to the BMP lipoprotein family. It in the C-terminal section; belongs to the G-protein coupled receptor 3 family. GABA-B receptor subfamily.

It localises to the membrane. The protein is Metabotropic glutamate receptor-like protein C (grlC) of Dictyostelium discoideum (Social amoeba).